The chain runs to 100 residues: Signal recognition particle 19 kDa protein (100 aa).

The protein belongs to the SRP19 family. In terms of assembly, part of the signal recognition particle protein translocation system, which is composed of SRP and FtsY. Archaeal SRP consists of a 7S RNA molecule of 300 nucleotides and two protein subunits: SRP54 and SRP19.

Its subcellular location is the cytoplasm. Functionally, involved in targeting and insertion of nascent membrane proteins into the cytoplasmic membrane. Binds directly to 7S RNA and mediates binding of the 54 kDa subunit of the SRP. The sequence is that of Signal recognition particle 19 kDa protein from Pyrococcus furiosus (strain ATCC 43587 / DSM 3638 / JCM 8422 / Vc1).